The primary structure comprises 267 residues: Undecaprenyl-diphosphatase 1 (267 aa).

The next 8 membrane-spanning stretches (helical) occupy residues 6–26 (VLVVALIQGLGEVLPFGAAGL), 41–60 (AALSVAAHAGILLALMIYFW), 83–103 (HLLLHVLAGTIPAAIVGWLVL), 109–129 (LVGQSGAAIILILGGVLLWGC), 142–162 (MSWVGAAGLGALQILSLVPGV), 185–205 (FSMLLAMPLILGHGVKTFWGL), 217–237 (LLMAMATAGLAALIGLAGMMA), and 244–264 (FVPFAILRIGFGIAVLGLVYF).

The protein belongs to the UppP family.

It localises to the cell inner membrane. The catalysed reaction is di-trans,octa-cis-undecaprenyl diphosphate + H2O = di-trans,octa-cis-undecaprenyl phosphate + phosphate + H(+). In terms of biological role, catalyzes the dephosphorylation of undecaprenyl diphosphate (UPP). Confers resistance to bacitracin. The chain is Undecaprenyl-diphosphatase 1 from Paramagnetospirillum magneticum (strain ATCC 700264 / AMB-1) (Magnetospirillum magneticum).